Here is a 470-residue protein sequence, read N- to C-terminus: Origin of replication complex subunit 4 (470 aa).

An ATP-binding site is contributed by 63–70; that stretch reads GPRGCGKA.

It belongs to the ORC4 family. As to quaternary structure, component of the origin recognition complex (ORC) composed of at least ORC1, ORC2, ORC3, ORC4, ORC5 and ORC6. ORC is regulated in a cell-cycle and development dependent manner. It is sequentially assembled at the exit from anaphase of mitosis and disassembled as cells enter S phase. Expressed in the shoot apical meristem (SAM), leaves, ears and roots (including root tips).

It is found in the nucleus. Component of the origin recognition complex (ORC) that binds origins of replication. DNA-binding is ATP-dependent. The specific DNA sequences that define origins of replication have not been identified yet. ORC is required to assemble the pre-replication complex necessary to initiate DNA replication. The chain is Origin of replication complex subunit 4 from Oryza sativa subsp. japonica (Rice).